The following is a 284-amino-acid chain: MAAKKNKKQKREDYRAAMKQDDVLTMPRKKFYRQRAHANPFSDHQLVYPPHPDQMDWSTLYPAYVAQEESQPEATPSSTTEDLSAPVKVKKLTQDVEVADIGCGFGGLLIALAPVMPQTLVLGLEIRVSVTQFVEDRIKVLRRQNEESKAYQNVSVLRANTMKFLPNFFRQGQLSKIFICFPDPHFKARKHKQRIVSTTLNSEYAYAVRPGGVVYTITDVPDLHGWMVQHFEAHPMFERVGVEEQEGDPCVEIMRNATEEGKKVERNKGEKFVALFRRLEDPVF.

S-adenosyl-L-methionine-binding positions include G102, E125–I126, N160–T161, and C180. D183 is an active-site residue. An S-adenosyl-L-methionine-binding site is contributed by T258–E260.

This sequence belongs to the class I-like SAM-binding methyltransferase superfamily. TrmB family. In terms of assembly, forms a complex with TRM82.

It is found in the nucleus. The catalysed reaction is guanosine(46) in tRNA + S-adenosyl-L-methionine = N(7)-methylguanosine(46) in tRNA + S-adenosyl-L-homocysteine. It functions in the pathway tRNA modification; N(7)-methylguanine-tRNA biosynthesis. Functionally, catalyzes the formation of N(7)-methylguanine at position 46 (m7G46) in tRNA. This chain is tRNA (guanine-N(7)-)-methyltransferase, found in Podospora anserina (strain S / ATCC MYA-4624 / DSM 980 / FGSC 10383) (Pleurage anserina).